We begin with the raw amino-acid sequence, 863 residues long: Transforming growth factor-beta receptor-associated protein 1 homolog (863 aa).

The region spanning 23–297 (RINIECIECC…QLLQDFEGKV (275 aa)) is the CNH domain. Residues 564–729 (RPTSEERRGQ…LLSVYLDPDV (166 aa)) form a CHCR repeat.

This sequence belongs to the TRAP1 family. As to quaternary structure, component of the putative class C core vacuole/endosome tethering (CORVET) complex.

It is found in the cytoplasm. It localises to the early endosome. Functionally, plays a role in the TGF-beta signaling pathway. In terms of biological role, plays a role in vesicle-mediated protein trafficking of the endocytic membrane transport pathway. Believed to act as a component of the putative CORVET endosomal tethering complexes which is proposed to be involved in the Rab5-to-Rab7 endosome conversion probably implicating MON1A/B, and via binding SNAREs and SNARE complexes to mediate tethering and docking events during SNARE-mediated membrane fusion. The CORVET complex is proposed to function as a Rab5 effector to mediate early endosome fusion probably in specific endosome subpopulations. The sequence is that of Transforming growth factor-beta receptor-associated protein 1 homolog (tgfbrap1) from Danio rerio (Zebrafish).